The sequence spans 249 residues: Proteasome subunit alpha type-3 (249 aa).

An N-acetylserine modification is found at S2. Residues S214 and S220 each carry the O-acetylserine modification. Residue K221 forms a Glycyl lysine isopeptide (Lys-Gly) (interchain with G-Cter in ubiquitin) linkage.

Belongs to the peptidase T1A family. In terms of assembly, component of the 20S core complex of the 26S proteasome. The 26S proteasome is composed of a core protease (CP), known as the 20S proteasome, capped at one or both ends by the 19S regulatory particle (RP/PA700). The 20S proteasome core is composed of 28 subunits that are arranged in four stacked rings, resulting in a barrel-shaped structure. The two end rings are each formed by seven alpha subunits, and the two central rings are each formed by seven beta subunits. The catalytic chamber with the active sites is on the inside of the barrel. Ubiquitous low levels.

The protein resides in the cytoplasm. It is found in the nucleus. Its function is as follows. The proteasome is a multicatalytic proteinase complex which is characterized by its ability to cleave peptides with Arg, Phe, Tyr, Leu, and Glu adjacent to the leaving group at neutral or slightly basic pH. The proteasome has an ATP-dependent proteolytic activity. The chain is Proteasome subunit alpha type-3 (PAG1) from Arabidopsis thaliana (Mouse-ear cress).